The primary structure comprises 320 residues: Major pollen allergen Pha a 5.1 (320 aa).

Positions 1–23 are cleaved as a signal peptide; that stretch reads MAVQKYTMALFLAVALVAGPAAP. Positions 21–45 are disordered; that stretch reads AAPTPPTPRTPPLLPPPRARDKATL. A compositionally biased stretch (pro residues) spans 22–37; it reads APTPPTPRTPPLLPPP.

This sequence belongs to the Poa p IX/Phl p VI allergen family.

The protein is Major pollen allergen Pha a 5.1 of Phalaris aquatica (Canary grass).